The chain runs to 532 residues: Drimenyl diphosphate synthase (532 aa).

(2E,6E)-farnesyl diphosphate is bound by residues arginine 121, lysine 122, glutamine 152, and tryptophan 154. Glutamate 158 contributes to the Mg(2+) binding site. 4 PFTB repeats span residues 275 to 317, 325 to 367, 428 to 469, and 475 to 518; these read PAAM…RVAG, IAAA…APNP, KRQA…SRDG, and LARA…CVLL. The active-site Proton donor is the aspartate 304. Residue arginine 502 coordinates (2E,6E)-farnesyl diphosphate.

This sequence belongs to the terpene cyclase/mutase family. Mg(2+) serves as cofactor. Requires Ni(2+) as cofactor. It depends on Co(2+) as a cofactor.

The enzyme catalyses (2E,6E)-farnesyl diphosphate = (5S,9S,10S)-drim-7-en-11-yl diphosphate. In terms of biological role, catalyzes the cyclization of farnesyl diphosphate (FPP) to drimenyl diphosphate. This chain is Drimenyl diphosphate synthase, found in Streptantibioticus cattleyicolor (strain ATCC 35852 / DSM 46488 / JCM 4925 / NBRC 14057 / NRRL 8057) (Streptomyces cattleya).